The following is a 540-amino-acid chain: 2-succinyl-5-enolpyruvyl-6-hydroxy-3-cyclohexene-1-carboxylate synthase (540 aa).

The protein belongs to the TPP enzyme family. MenD subfamily. As to quaternary structure, homodimer. Requires Mg(2+) as cofactor. Mn(2+) serves as cofactor. The cofactor is thiamine diphosphate.

The enzyme catalyses isochorismate + 2-oxoglutarate + H(+) = 5-enolpyruvoyl-6-hydroxy-2-succinyl-cyclohex-3-ene-1-carboxylate + CO2. It functions in the pathway quinol/quinone metabolism; 1,4-dihydroxy-2-naphthoate biosynthesis; 1,4-dihydroxy-2-naphthoate from chorismate: step 2/7. Its pathway is quinol/quinone metabolism; menaquinone biosynthesis. In terms of biological role, catalyzes the thiamine diphosphate-dependent decarboxylation of 2-oxoglutarate and the subsequent addition of the resulting succinic semialdehyde-thiamine pyrophosphate anion to isochorismate to yield 2-succinyl-5-enolpyruvyl-6-hydroxy-3-cyclohexene-1-carboxylate (SEPHCHC). In Mycobacteroides abscessus (strain ATCC 19977 / DSM 44196 / CCUG 20993 / CIP 104536 / JCM 13569 / NCTC 13031 / TMC 1543 / L948) (Mycobacterium abscessus), this protein is 2-succinyl-5-enolpyruvyl-6-hydroxy-3-cyclohexene-1-carboxylate synthase.